Here is a 664-residue protein sequence, read N- to C-terminus: Macoilin (664 aa).

4 helical membrane passes run 28–48 (TFLY…DFVL), 75–95 (AFSV…LLFI), 120–140 (VCLP…AIRF), and 154–174 (FAAH…KSYV). Over residues 252 to 265 (YREKGKEKDKDAKK) the composition is skewed to basic and acidic residues. Residues 252 to 274 (YREKGKEKDKDAKKHNLGINNNN) are disordered. Ser305 is modified (phosphoserine). The segment covering 320-348 (KNYKNASGVVNSSPRSHSATNGSIPSSSS) has biased composition (polar residues). Positions 320–375 (KNYKNASGVVNSSPRSHSATNGSIPSSSSKNEKKQRCTSKGPSAHKDLMENCIPNN) are disordered. Asn324 carries an N-linked (GlcNAc...) asparagine glycan. The residue at position 332 (Ser332) is a Phosphoserine. Residues Asn340 and Asn452 are each glycosylated (N-linked (GlcNAc...) asparagine). Residues 630 to 664 (TSPLSPVSPHYSSKFVETSPSGLDPNASVYQPLKK) are disordered. A phosphoserine mark is found at Ser631 and Ser634. Residue Asn655 is glycosylated (N-linked (GlcNAc...) asparagine).

Belongs to the macoilin family.

It localises to the rough endoplasmic reticulum membrane. The protein resides in the nucleus membrane. Functionally, plays a role in the regulation of neuronal activity. The protein is Macoilin of Rattus norvegicus (Rat).